Reading from the N-terminus, the 193-residue chain is D-alanyl-D-alanine dipeptidase (193 aa).

2 residues coordinate Zn(2+): His-98 and Asp-105. The active-site Proton donor/acceptor is the Glu-162. Zn(2+) is bound at residue His-165.

The protein belongs to the peptidase M15D family. It depends on Zn(2+) as a cofactor.

The protein localises to the cytoplasm. It catalyses the reaction D-alanyl-D-alanine + H2O = 2 D-alanine. Its function is as follows. Catalyzes hydrolysis of the D-alanyl-D-alanine dipeptide. May have a role in cell-wall turnover. The protein is D-alanyl-D-alanine dipeptidase of Escherichia coli (strain K12).